Reading from the N-terminus, the 306-residue chain is MIFQRTVKEMVKTTGVGLHSGNKVTLTIKPAPVNTGIVLVRTDLTPSVAIAAKADQVRETTMCTALVNDEGVRISTIEHLFAALAGLGIDNATIEVDAPEIPIMDGSASPWVFLLQSVGIQEQSAAKKYLRIKRPVRVEDGDKWAELRPFKGFRVDFAIDFNHPEIARSQQHMVMDFSSSAFVRDISRARTFGFMRDIEYLRANNLALGGSMENAVVLDEYRVLNPDGLRYEDEFVKHKILDAFGDLYVAGHAIVGEFRAFKTGHALNNQLVRALLAEQDAWELVSFEKEEEVPVSFAVPAGAVLA.

Zn(2+)-binding residues include His-79, His-238, and Asp-242. Residue His-265 is the Proton donor of the active site.

Belongs to the LpxC family. Zn(2+) serves as cofactor.

The catalysed reaction is a UDP-3-O-[(3R)-3-hydroxyacyl]-N-acetyl-alpha-D-glucosamine + H2O = a UDP-3-O-[(3R)-3-hydroxyacyl]-alpha-D-glucosamine + acetate. It functions in the pathway glycolipid biosynthesis; lipid IV(A) biosynthesis; lipid IV(A) from (3R)-3-hydroxytetradecanoyl-[acyl-carrier-protein] and UDP-N-acetyl-alpha-D-glucosamine: step 2/6. Functionally, catalyzes the hydrolysis of UDP-3-O-myristoyl-N-acetylglucosamine to form UDP-3-O-myristoylglucosamine and acetate, the committed step in lipid A biosynthesis. The protein is UDP-3-O-acyl-N-acetylglucosamine deacetylase of Shewanella loihica (strain ATCC BAA-1088 / PV-4).